Here is a 112-residue protein sequence, read N- to C-terminus: Large ribosomal subunit protein P2 (112 aa).

Positions 81–112 (VETAEAKKEDKKEEKKEEEEEEEDDLGFSLFG) are disordered. The segment covering 84-95 (AEAKKEDKKEEK) has biased composition (basic and acidic residues). The span at 96-106 (KEEEEEEEDDL) shows a compositional bias: acidic residues.

This sequence belongs to the eukaryotic ribosomal protein P1/P2 family. In terms of assembly, P1 and P2 exist as dimers at the large ribosomal subunit. Post-translationally, phosphorylated.

Its function is as follows. Plays an important role in the elongation step of protein synthesis. The protein is Large ribosomal subunit protein P2 (MAL3P3.19) of Plasmodium falciparum (isolate 3D7).